We begin with the raw amino-acid sequence, 1805 residues long: Kinesin-like protein KIF13A (1805 aa).

Positions 5 to 352 constitute a Kinesin motor domain; the sequence is KVKVAVRVRP…LRYADRAKRI (348 aa). Residue 102–109 participates in ATP binding; it reads GQTGSGKS. The stretch at 359 to 436 forms a coiled coil; it reads NEDPNAKVIR…QLESMGISLE (78 aa). The 51-residue stretch at 469–519 folds into the FHA domain; the sequence is HTRVGADTSQDIQLFGIGIQPQHCEIDIASDGDVTLTPKENARSCVNGTLV. The segment covering 556–567 has biased composition (basic and acidic residues); the sequence is EKETGPPEHDLD. Disordered stretches follow at residues 556–575 and 633–656; these read EKETGPPEHDLDAASEASSE and QQLSPDRQPQSSGPDRLAYSSQTA. Coiled-coil stretches lie at residues 602–775 and 1100–1138; these read VQVL…LYGK and DALIKRREYLDEQIKKVSNKTEKTEDDVEREAQLVEQWV. At S636 the chain carries Phosphoserine. S1287 bears the Phosphoserine mark. Residues 1385 to 1396 show a composition bias toward polar residues; that stretch reads TPNVHNVSSSRP. The interval 1385–1404 is disordered; sequence TPNVHNVSSSRPDLSGFDED. Phosphoserine occurs at positions 1454, 1481, 1490, and 1494. The segment at 1507–1531 is disordered; the sequence is PSGSNGSSMPVEHNSKREKKIDSEE. Residues 1518–1547 adopt a coiled-coil conformation; sequence EHNSKREKKIDSEEEENELEAINRKLISSQ. Over residues 1519–1528 the composition is skewed to basic and acidic residues; the sequence is HNSKREKKID. Residues S1529 and S1572 each carry the phosphoserine modification. The segment covering 1612–1621 has biased composition (low complexity); that stretch reads MVVPSSDSSD. A disordered region spans residues 1612–1645; that stretch reads MVVPSSDSSDQLAIQTKDADSTEHSTPSLVHDFR. Residues S1648 and S1698 each carry the phosphoserine modification. The interval 1749-1779 is disordered; the sequence is GLTDSSAGELSSRRSLPNKTGGKTVSDGLHH. Residues 1751–1771 are compositionally biased toward polar residues; the sequence is TDSSAGELSSRRSLPNKTGGK.

Belongs to the TRAFAC class myosin-kinesin ATPase superfamily. Kinesin family. Interacts with AP2B1. Interacts with ZFYVE26. Interacts with AP1G1 and AP1G2. Widely expressed, with highest levels in heart, brain and skeletal muscle.

Its subcellular location is the cytoplasm. It is found in the cytoskeleton. It localises to the microtubule organizing center. The protein resides in the centrosome. The protein localises to the midbody. Its subcellular location is the endosome membrane. It is found in the golgi apparatus membrane. In terms of biological role, plus end-directed microtubule-dependent motor protein involved in intracellular transport and regulating various processes such as mannose-6-phosphate receptor (M6PR) transport to the plasma membrane, endosomal sorting during melanosome biogenesis and cytokinesis. Mediates the transport of M6PR-containing vesicles from trans-Golgi network to the plasma membrane via direct interaction with the AP-1 complex. During melanosome maturation, required for delivering melanogenic enzymes from recycling endosomes to nascent melanosomes by creating peripheral recycling endosomal subdomains in melanocytes. Also required for the abscission step in cytokinesis: mediates translocation of ZFYVE26, and possibly TTC19, to the midbody during cytokinesis. This chain is Kinesin-like protein KIF13A (KIF13A), found in Homo sapiens (Human).